Reading from the N-terminus, the 443-residue chain is MREILHVQGGQCGNQIGAKFWEVVCTEHGIDPTGTYRGDSETQLERVNVYYNEASCGRYVPRAVLMDLEPGTMDSVRSGHYGQIFRPDNFVFGQSGAGNNWAKGXYTEGAELIDSVLAVVRKEAENCDCLQGFQVCHSLGGGTGSGMGTLLISKIREEYPDRMMMTFSVFASPKVSDTVVEPYNATLSVHQLVENADECMVLDNEALYDIXLRTLKLVTPTFGDLNHLISATMSGVTCCLRFPGQLNSDLRKLAVNLIPFPRLHFFMVGFAPLTSRGSQQYXSLTVPELTQQMWDAKNMMCAADPRHGRYLTASAMFRGKMSTKEVDEQMINVQNKNSSYFVEWIPNNVKSSVCDIPPVGLKMAVTFIGNSTSIQEMFRRVSDQFTAMFRRKAFLHWYTGEGMDEMEFTEAESNMNDLVSEYQQYQDATAEREGEYEEDYDEA.

Residues glutamine 11, glutamate 69, serine 138, glycine 142, threonine 143, glycine 144, asparagine 204, and asparagine 226 each contribute to the GTP site. Glutamate 69 lines the Mg(2+) pocket. The disordered stretch occupies residues 424–443 (QYQDATAEREGEYEEDYDEA). Residues 434–443 (GEYEEDYDEA) show a composition bias toward acidic residues.

This sequence belongs to the tubulin family. In terms of assembly, dimer of alpha and beta chains. A typical microtubule is a hollow water-filled tube with an outer diameter of 25 nm and an inner diameter of 15 nM. Alpha-beta heterodimers associate head-to-tail to form protofilaments running lengthwise along the microtubule wall with the beta-tubulin subunit facing the microtubule plus end conferring a structural polarity. Microtubules usually have 13 protofilaments but different protofilament numbers can be found in some organisms and specialized cells. The cofactor is Mg(2+).

The protein resides in the cytoplasm. It localises to the cytoskeleton. In terms of biological role, tubulin is the major constituent of microtubules, a cylinder consisting of laterally associated linear protofilaments composed of alpha- and beta-tubulin heterodimers. Microtubules grow by the addition of GTP-tubulin dimers to the microtubule end, where a stabilizing cap forms. Below the cap, tubulin dimers are in GDP-bound state, owing to GTPase activity of alpha-tubulin. The polypeptide is Tubulin beta-1 chain (TUBB1) (Anemia phyllitidis (Fern)).